We begin with the raw amino-acid sequence, 286 residues long: MSNSDYAKDVLVSADWVESHLDEFQSDDPAYRLVEVDVDTEAYDESHAPGAIGFNWESQLQDQTTRDVLTKEDFEDLLGSHGISEDSTVVLYGDNSNWFAAYTYWQFKYYGHENVHLMNGGRDYWVDNDYPTTDEIPSFPEQDYSAKGPFEDIRAYRDDVEKAVDKGLPLVDVRSPEEFSGEILAPPGLQETAQRGGHIPGASNISWAATVNDDGTFKSADELRDLYADQGIEGDESTIAYCRIGERSSIAWFALHELLGYENVTNYDGSWTEWGNLVGAPVEKGN.

The region spanning 27-134 is the Rhodanese 1 domain; that stretch reads DDPAYRLVEV…WVDNDYPTTD (108 aa). Residues lysine 162 and lysine 166 each participate in a glycyl lysine isopeptide (Lys-Gly) (interchain with G-Cter in SAMP2) cross-link. Residues 164–283 form the Rhodanese 2 domain; it reads VDKGLPLVDV…WGNLVGAPVE (120 aa). The Cysteine persulfide intermediate role is filled by cysteine 242. Arginine 247 provides a ligand contact to substrate.

It carries out the reaction thiosulfate + hydrogen cyanide = thiocyanate + sulfite + 2 H(+). In terms of biological role, may be a sulfotransferase involved in the formation of thiosulfate. This is Putative thiosulfate sulfurtransferase (tssA) from Haloferax volcanii (strain ATCC 29605 / DSM 3757 / JCM 8879 / NBRC 14742 / NCIMB 2012 / VKM B-1768 / DS2) (Halobacterium volcanii).